The following is a 401-amino-acid chain: 1-deoxy-D-xylulose 5-phosphate reductoisomerase (401 aa).

Residues Thr10, Gly11, Ser12, Ile13, Asn38, and Asn124 each contribute to the NADPH site. Lys125 contributes to the 1-deoxy-D-xylulose 5-phosphate binding site. Position 126 (Glu126) interacts with NADPH. Mn(2+) is bound at residue Asp150. Positions 151, 152, 186, and 209 each coordinate 1-deoxy-D-xylulose 5-phosphate. Glu152 lines the Mn(2+) pocket. Residue Gly215 coordinates NADPH. 4 residues coordinate 1-deoxy-D-xylulose 5-phosphate: Ser222, Asn227, Lys228, and Glu231. Mn(2+) is bound at residue Glu231.

This sequence belongs to the DXR family. The cofactor is Mg(2+). Mn(2+) serves as cofactor.

It catalyses the reaction 2-C-methyl-D-erythritol 4-phosphate + NADP(+) = 1-deoxy-D-xylulose 5-phosphate + NADPH + H(+). Its pathway is isoprenoid biosynthesis; isopentenyl diphosphate biosynthesis via DXP pathway; isopentenyl diphosphate from 1-deoxy-D-xylulose 5-phosphate: step 1/6. In terms of biological role, catalyzes the NADPH-dependent rearrangement and reduction of 1-deoxy-D-xylulose-5-phosphate (DXP) to 2-C-methyl-D-erythritol 4-phosphate (MEP). The polypeptide is 1-deoxy-D-xylulose 5-phosphate reductoisomerase (Vibrio campbellii (strain ATCC BAA-1116)).